Consider the following 283-residue polypeptide: Non-selective voltage-gated ion channel VDAC3 (283 aa).

Cys2 is subject to N-acetylcysteine. Position 4 is a phosphothreonine (Thr4). N6-acetyllysine is present on residues Lys12, Lys15, and Lys20. The next 2 membrane-spanning stretches (beta stranded) occupy residues 26–35 and 39–47; these read MVKIDLRTKS and VEFSTSGHA. Lys53 participates in a covalent cross-link: Glycyl lysine isopeptide (Lys-Gly) (interchain with G-Cter in ubiquitin). The next 3 beta stranded transmembrane spans lie at 54–64, 69–76, and 80–89; these read ASGNLETKYKV, LTFTQKWN, and TLGTEISLEN. Position 90 is an N6-acetyllysine (Lys90). Residues 95-104 traverse the membrane as a beta stranded segment; sequence LKLTLDTIFV. Residues Lys109 and Lys110 each participate in a glycyl lysine isopeptide (Lys-Gly) (interchain with G-Cter in ubiquitin) cross-link. Beta stranded transmembrane passes span 111 to 120, 123 to 130, 137 to 145, 150 to 158, 163 to 175, 178 to 185, 189 to 198, 202 to 211, 218 to 227, and 231 to 238; these read SGKLKASYKR, FSLGSNVD, TIYGWAVLA, LAGYQMSFD, KLSQNNFALGYKA, FQLHTHVN, EFGGSIYQKV, IETSINLAWT, RFGIAAKYKL, and TSLSAKVN. The residue at position 241 (Ser241) is a Phosphoserine. NAD(+) is bound by residues 242–244 and 260–264; these read LIG and SALID. 2 consecutive transmembrane segments (beta stranded) span residues 242–251 and 254–263; these read LIGLGYTQTL and GVKLTLSALI. Lys266 carries the N6-acetyllysine; alternate modification. Residue Lys266 forms a Glycyl lysine isopeptide (Lys-Gly) (interchain with G-Cter in ubiquitin); alternate linkage. Residues 273 to 282 traverse the membrane as a beta stranded segment; the sequence is HKVGLGFELE.

It belongs to the eukaryotic mitochondrial porin family. In terms of assembly, interacts with ARMC12 in a TBC1D21-dependent manner. Interacts with MISFA. In terms of processing, ubiquitinated by PRKN during mitophagy, leading to its degradation and enhancement of mitophagy. Deubiquitinated by USP30.

Its subcellular location is the mitochondrion outer membrane. The protein localises to the membrane. It catalyses the reaction chloride(in) = chloride(out). It carries out the reaction K(+)(in) = K(+)(out). Functionally, non-selective voltage-gated ion channel that mediates the transport of anions and cations through the mitochondrion outer membrane and plasma membrane. Forms a high-conducting channel with a stable open state and a voltage-induced closure with a mild preference for anions over cations. Involved in male fertility and sperm mitochondrial sheath formation. This chain is Non-selective voltage-gated ion channel VDAC3, found in Oryctolagus cuniculus (Rabbit).